Consider the following 92-residue polypeptide: Protein OP-ORF (92 aa).

Positions 53 to 82 (KMLAATISILEEEVTELVTELNNTTNLTAK) form a coiled coil.

The polypeptide is Protein OP-ORF (Rice dwarf virus (isolate Fujian) (RDV)).